The chain runs to 313 residues: tRNA uridine(34) hydroxylase (313 aa).

In terms of domain architecture, Rhodanese spans 127-225 (SDPDTILIDT…YLETVPEEES (99 aa)). Cysteine 185 acts as the Cysteine persulfide intermediate in catalysis.

It belongs to the TrhO family.

The catalysed reaction is uridine(34) in tRNA + AH2 + O2 = 5-hydroxyuridine(34) in tRNA + A + H2O. Functionally, catalyzes oxygen-dependent 5-hydroxyuridine (ho5U) modification at position 34 in tRNAs. The polypeptide is tRNA uridine(34) hydroxylase (Gluconobacter oxydans (strain 621H) (Gluconobacter suboxydans)).